The primary structure comprises 436 residues: tRNA (guanine(37)-N(1))-methyltransferase 1 (436 aa).

S-adenosyl-L-methionine contacts are provided by residues histidine 229, 277-278, and asparagine 325; that span reads DL.

The protein belongs to the class I-like SAM-binding methyltransferase superfamily. TRM5/TYW2 family. As to quaternary structure, monomer.

The protein resides in the mitochondrion matrix. It localises to the nucleus. Its subcellular location is the cytoplasm. The catalysed reaction is guanosine(37) in tRNA + S-adenosyl-L-methionine = N(1)-methylguanosine(37) in tRNA + S-adenosyl-L-homocysteine + H(+). In terms of biological role, specifically methylates the N1 position of guanosine-37 in various cytoplasmic and mitochondrial tRNAs. Methylation is not dependent on the nature of the nucleoside 5' of the target nucleoside. This is the first step in the biosynthesis of wybutosine (yW), a modified base adjacent to the anticodon of tRNAs and required for accurate decoding. This chain is tRNA (guanine(37)-N(1))-methyltransferase 1, found in Phaeodactylum tricornutum (strain CCAP 1055/1).